A 431-amino-acid polypeptide reads, in one-letter code: Protein prenyltransferase alpha subunit repeat-containing protein 1-B (431 aa).

5 PFTA repeats span residues 85-118 (ELID…TLNP), 120-153 (KDLQ…VQEL), 178-211 (EEMH…GNLN), 217-250 (DELS…LCKT), and 293-326 (EEMK…HQLL). Residues 363-383 (PMDVDGMSDPNKQGYTQETKR) form a disordered region. A PFTA 6 repeat occupies 394 to 431 (SLDSELRFINCVLTNCCSPEQSRFAASYRKWLLSLQGY).

This sequence belongs to the protein prenyltransferase subunit alpha family.

In Xenopus laevis (African clawed frog), this protein is Protein prenyltransferase alpha subunit repeat-containing protein 1-B (ptar1-b).